The chain runs to 475 residues: Aspartyl/glutamyl-tRNA(Asn/Gln) amidotransferase subunit B (475 aa).

The protein belongs to the GatB/GatE family. GatB subfamily. As to quaternary structure, heterotrimer of A, B and C subunits.

The catalysed reaction is L-glutamyl-tRNA(Gln) + L-glutamine + ATP + H2O = L-glutaminyl-tRNA(Gln) + L-glutamate + ADP + phosphate + H(+). It catalyses the reaction L-aspartyl-tRNA(Asn) + L-glutamine + ATP + H2O = L-asparaginyl-tRNA(Asn) + L-glutamate + ADP + phosphate + 2 H(+). In terms of biological role, allows the formation of correctly charged Asn-tRNA(Asn) or Gln-tRNA(Gln) through the transamidation of misacylated Asp-tRNA(Asn) or Glu-tRNA(Gln) in organisms which lack either or both of asparaginyl-tRNA or glutaminyl-tRNA synthetases. The reaction takes place in the presence of glutamine and ATP through an activated phospho-Asp-tRNA(Asn) or phospho-Glu-tRNA(Gln). The polypeptide is Aspartyl/glutamyl-tRNA(Asn/Gln) amidotransferase subunit B (Bacillus cereus (strain ATCC 10987 / NRS 248)).